The chain runs to 416 residues: MAQGFKVRDLSLAGEGRMQIEWAERHMPVLMRLRSSMGGDKPLSGVRVAACLHVTKETAVLVETLRKWGAEVYLAPSNPLSTQDEVAAALAEAGIGVFAWRGMTPEEYKWALSTVAGREPDIVIDDGADLHVLLHEEMRSVGEKVWGGTEETTTGVIRLRALEREGRLLYPVIAVNDALTKFMFDNRYGTGQSTVDGVLRATNILIAGKTVVVAGYGWVGRGIAARFRGMGAKVVVTEVDPVRALEAAMDGFTVTTMDEAASLGDVFITATGNINVIDARHMEKMKDGAILANAGHFNVEINVAALEEMSVSKRRVRRYLDEYRLPDGRRLYLIGEGRLVNLVAAEGHPSEVMDMSFSNQALAVLKIAGERGRLEKRVHRVERIQDEMVARLKLETMGVRIDSLTEEQKLYLQKWK.

Residues Thr55, Asp126, and Glu151 each coordinate substrate. Position 152 to 154 (152 to 154 (TTT)) interacts with NAD(+). Substrate is bound by residues Lys181 and Asp185. NAD(+) contacts are provided by residues Asn186, 215 to 220 (GYGWVG), Glu238, Asn273, 294 to 296 (AGH), and Asn341.

It belongs to the adenosylhomocysteinase family. NAD(+) is required as a cofactor.

It localises to the cytoplasm. The catalysed reaction is S-adenosyl-L-homocysteine + H2O = L-homocysteine + adenosine. It functions in the pathway amino-acid biosynthesis; L-homocysteine biosynthesis; L-homocysteine from S-adenosyl-L-homocysteine: step 1/1. Its function is as follows. May play a key role in the regulation of the intracellular concentration of adenosylhomocysteine. The sequence is that of Adenosylhomocysteinase from Aeropyrum pernix (strain ATCC 700893 / DSM 11879 / JCM 9820 / NBRC 100138 / K1).